The primary structure comprises 454 residues: MAQLLTSRQAEELHRALIAYLSSNNLTSTAAALRAEIGLGEDVFDATTAKKYEGLLEKKWTSVVRLQKKVRHTSQLSNATPTSRQNKDPVNWLPKSPARHTLQSHRQPITCVAFHPVFSSLASGSEDQTIKIWDWELGELERTIKGHTKTVLDVDFGGPRGNTLLASCSSDLTIKLWDPSDDYKNIRTLPGHDHSVSAVRFIPSGVAGGAGNLLVSASRDKTLRIWDVSTGYCVKTLRGHAEWVRDVCPSVDGRFILSTSDDYTSRLWDVSIANPEPKTTLIGHEHVVLCCAIAPSASYPHLAAIAGVKKPPTTSAVEFMATGSRDKTIRLWDARGTCIKILVGHDNWVRGLVFHPGGKYLLSASDDYTLRCWDLTQEGRCVKTISDAHAHFVQCIRWAPSVVKDVSVANGGDGQGGEANGTPRQAAGAGAAEAQIRCVLATGSVDLNVRIFAN.

The region spanning 9–41 (QAEELHRALIAYLSSNNLTSTAAALRAEIGLGE) is the LisH domain. Positions 71–93 (RHTSQLSNATPTSRQNKDPVNWL) are disordered. Residues 73 to 84 (TSQLSNATPTSR) show a composition bias toward polar residues. 7 WD repeats span residues 104–145 (SHRQ…RTIK), 147–187 (HTKT…KNIR), 191–236 (GHDH…CVKT), 239–278 (GHAEWVRDVCPSVDGRFILSTSDDYTSRLWDVSIANPEPK), 283–342 (GHEH…IKIL), 344–383 (GHDNWVRGLVFHPGGKYLLSASDDYTLRCWDLTQEGRCVK), and 388–450 (AHAH…LNVR).

It belongs to the WD repeat LIS1/nudF family. In terms of assembly, self-associates. Interacts with NDL1 and dynein.

It is found in the cytoplasm. It localises to the cytoskeleton. The protein localises to the spindle pole. Positively regulates the activity of the minus-end directed microtubule motor protein dynein. May enhance dynein-mediated microtubule sliding by targeting dynein to the microtubule plus end. Required for nuclear migration during vegetative growth as well as development. Required for retrograde early endosome (EE) transport from the hyphal tip. Required for localization of dynein to the mitotic spindle poles. Recruits additional proteins to the dynein complex at SPBs. The sequence is that of Nuclear distribution protein PAC1-1 from Chaetomium globosum (strain ATCC 6205 / CBS 148.51 / DSM 1962 / NBRC 6347 / NRRL 1970) (Soil fungus).